The primary structure comprises 87 residues: U3-theraphotoxin-Hhn1j (87 aa).

A signal peptide spans 1 to 24 (MVNMKASMFLTFAGLVLLFVVCYA). Residues 25 to 52 (SESEEKEFPKEMLSSIFAVDNDFKQEER) constitute a propeptide that is removed on maturation. Intrachain disulfides connect Cys-54–Cys-67, Cys-61–Cys-72, and Cys-66–Cys-79.

The protein belongs to the neurotoxin 10 (Hwtx-1) family. 51 (Hntx-8) subfamily. Hntx-8 sub-subfamily. In terms of tissue distribution, expressed by the venom gland.

It localises to the secreted. Functionally, ion channel inhibitor. This chain is U3-theraphotoxin-Hhn1j, found in Cyriopagopus hainanus (Chinese bird spider).